Consider the following 203-residue polypeptide: uncharacterized protein (203 aa).

The protein belongs to the DadA oxidoreductase family.

Functionally, either a functional dehydrogenase or a non-functional fragment. This is an uncharacterized protein from Sinorhizobium fredii (strain NBRC 101917 / NGR234).